The following is a 358-amino-acid chain: Probable branched-chain-amino-acid aminotransferase (358 aa).

The residue at position 196 (lysine 196) is an N6-(pyridoxal phosphate)lysine.

This sequence belongs to the class-IV pyridoxal-phosphate-dependent aminotransferase family. Requires pyridoxal 5'-phosphate as cofactor.

The catalysed reaction is L-leucine + 2-oxoglutarate = 4-methyl-2-oxopentanoate + L-glutamate. It carries out the reaction L-isoleucine + 2-oxoglutarate = (S)-3-methyl-2-oxopentanoate + L-glutamate. It catalyses the reaction L-valine + 2-oxoglutarate = 3-methyl-2-oxobutanoate + L-glutamate. Its pathway is amino-acid biosynthesis; L-isoleucine biosynthesis; L-isoleucine from 2-oxobutanoate: step 4/4. The protein operates within amino-acid biosynthesis; L-leucine biosynthesis; L-leucine from 3-methyl-2-oxobutanoate: step 4/4. It functions in the pathway amino-acid biosynthesis; L-valine biosynthesis; L-valine from pyruvate: step 4/4. Acts on leucine, isoleucine and valine. In Staphylococcus aureus (strain N315), this protein is Probable branched-chain-amino-acid aminotransferase (ilvE).